The sequence spans 206 residues: Small ribosomal subunit protein uS4 (206 aa).

In terms of domain architecture, S4 RNA-binding spans 96–157 (SRLDNVVYRM…KAKKQVRIQE (62 aa)).

This sequence belongs to the universal ribosomal protein uS4 family. As to quaternary structure, part of the 30S ribosomal subunit. Contacts protein S5. The interaction surface between S4 and S5 is involved in control of translational fidelity.

Functionally, one of the primary rRNA binding proteins, it binds directly to 16S rRNA where it nucleates assembly of the body of the 30S subunit. With S5 and S12 plays an important role in translational accuracy. The polypeptide is Small ribosomal subunit protein uS4 (Neisseria gonorrhoeae (strain ATCC 700825 / FA 1090)).